We begin with the raw amino-acid sequence, 126 residues long: MFS14 protein (126 aa).

Residues 1-23 (MALEAATAPRALLAACLVLLVLG) constitute a signal peptide (or 24, or 26).

Enhanced expression in male flowers. Accumulates in the tapetum.

The protein is MFS14 protein (MFS14) of Zea mays (Maize).